We begin with the raw amino-acid sequence, 935 residues long: Protein translocase subunit SecA (935 aa).

ATP-binding positions include glutamine 90, 108 to 112, and aspartate 504; that span reads GEGKT. Residues 543 to 568 form a disordered region; it reads GGRRPQGFGTSKKKGKNWSPSDADIF.

This sequence belongs to the SecA family. As to quaternary structure, monomer and homodimer. Part of the essential Sec protein translocation apparatus which comprises SecA, SecYEG and auxiliary proteins SecDF. Other proteins may also be involved.

It localises to the cell inner membrane. The protein resides in the cellular thylakoid membrane. It is found in the cytoplasm. It carries out the reaction ATP + H2O + cellular proteinSide 1 = ADP + phosphate + cellular proteinSide 2.. In terms of biological role, part of the Sec protein translocase complex. Interacts with the SecYEG preprotein conducting channel. Has a central role in coupling the hydrolysis of ATP to the transfer of proteins into and across the cell membrane, serving as an ATP-driven molecular motor driving the stepwise translocation of polypeptide chains across the membrane. Functionally, probably participates in protein translocation into and across both the cytoplasmic and thylakoid membranes in cyanobacterial cells. The polypeptide is Protein translocase subunit SecA (Rippkaea orientalis (strain PCC 8801 / RF-1) (Cyanothece sp. (strain PCC 8801))).